The following is a 695-amino-acid chain: MEKNDKDPDHDDKSKGDEKGDVVSDAHPSDDAHHQDGISNENVDVVGNAETDHQDPGDNNVDKVSQGEEAPEIRQTLESLSEELDQFLPTLSLHMEEHKDSTEEKGEDGYFQIPQFVGKFLDLFEEKLSKYDSGEPKTVWYQDPEEVSSLLEAVDRVSKLMGLLLNTKSCLDHHESLINHAGSIQQRAMAFLEDEFRIILEESVTKESVVVTDDSNSQRRSTADQQDHQNDVVVSQDHDQMLVPECGDQEIEYPGYPEDVVVVLRKIAEKMKAGGYGWECREVYLVGRRNILMRTLKQDCEFEKVSIDEVQKMSWDTLEREIPIWNKTFKDCSSLFFPGELKLAERIFPGDEGNLFCIVTHGLAIQFLGFAEAVAMTRRSTEKLFKILDIYETLRDSFPAMEELFPEELRSELRNEVTSARSRLGETAIHIFCDLEHSIKSDSSKTPVPGGAVHPLTRYTMNYLKYSCEYKDTLEQVFKSHSKMEREEEEPVESGNSAFASQLMRIMELLDGNLETKSKQYKDIPLSCIFMMNNGRYIVQKIKGSAEIHEVMGDTWCRRRSSELRNYHKNYQRETWGKLLGFLGHEGLMHNGKIVKPNLKERFKSFNATFDEIHKTQTTWVVNDEQLQSELRVSITAVMIPAYRAFMARFGQYLDPGRQTEKYVKYQPEDIEDLIDQLFEGNTSSSSTATARRRT.

Positions 1-36 (MEKNDKDPDHDDKSKGDEKGDVVSDAHPSDDAHHQD) are enriched in basic and acidic residues. Disordered regions lie at residues 1 to 71 (MEKN…EEAP) and 210 to 229 (VVTDDSNSQRRSTADQQDHQ). The residue at position 212 (Thr-212) is a Phosphothreonine. Phosphoserine occurs at positions 215 and 217. Residue Thr-446 is modified to Phosphothreonine. 2 positions are modified to phosphoserine: Ser-494 and Ser-605.

Belongs to the EXO70 family. In terms of assembly, interacts with ROH1A and ROH1D independently of its phosphorylation status. In terms of processing, phosphorylation on Ser and Thr residues promotes its ability to repress pollen tube growth and to regulate cellular architecture at the pollen tube tip. As to expression, expressed in anthers, pollen and root trichoblast cells. Also observed in anther tapetum.

It is found in the cytoplasm. Its function is as follows. Required for optimal tip growth of pollen tube; dose-dependent negative regulator of exocyst function in pollen tube growth and cellular architecture at the pollen tube tip, probably by modulating membrane trafficking and exocytosis dynamics. The sequence is that of Exocyst complex component EXO70C2 from Arabidopsis thaliana (Mouse-ear cress).